A 333-amino-acid chain; its full sequence is tRNA N6-adenosine threonylcarbamoyltransferase (333 aa).

2 residues coordinate Fe cation: H110 and H114. Residues 133 to 137 (IVSGG), D166, G179, D183, and N275 each bind substrate. D302 provides a ligand contact to Fe cation.

Belongs to the KAE1 / TsaD family. Fe(2+) serves as cofactor.

Its subcellular location is the cytoplasm. It catalyses the reaction L-threonylcarbamoyladenylate + adenosine(37) in tRNA = N(6)-L-threonylcarbamoyladenosine(37) in tRNA + AMP + H(+). In terms of biological role, required for the formation of a threonylcarbamoyl group on adenosine at position 37 (t(6)A37) in tRNAs that read codons beginning with adenine. Is involved in the transfer of the threonylcarbamoyl moiety of threonylcarbamoyl-AMP (TC-AMP) to the N6 group of A37, together with TsaE and TsaB. TsaD likely plays a direct catalytic role in this reaction. The chain is tRNA N6-adenosine threonylcarbamoyltransferase from Thermodesulfovibrio yellowstonii (strain ATCC 51303 / DSM 11347 / YP87).